The primary structure comprises 456 residues: MGQTLFDKVWNRHVLYGKLGEPQLLYIDLHLIHEVTSPQAFEGLRLQNRKLRRPDLTFATLDHNVPTIDIFNIKDEIANKQITTLQKNAIDFGVHIFDMGSDEQGIVHMVGPETGLTQPGKTIVCGDSHTATHGAFGAIAFGIGTSEVEHVFATQTLWQTKPKNLKIDINGTLPTGVYAKDIILHLIKTYGVDFGTGYALEFTGETIKNLSMDGRMTICNMAIEGGAKYGIIQPDDITFEYVKGRPFADNFAKSVDKWRELYSDDDAIFDRVIELDVSTLEPQVTWGTNPEMGVNFSEPFPEINDINDQRAYDYMGLEPGQKAEDIDLGYVFLGSCTNARLSDLIEASHIVKGNKVHPNITAIVVPGSRTVKKEAEKLGLDTIFKNAGFEWREPGCSMCLGMNPDQVPEGVHCASTSNRNFEGRQGKGARTHLVSPAMAAAAAIHGKFVDVRKVVV.

[4Fe-4S] cluster contacts are provided by cysteine 336, cysteine 396, and cysteine 399.

This sequence belongs to the aconitase/IPM isomerase family. LeuC type 1 subfamily. In terms of assembly, heterodimer of LeuC and LeuD. It depends on [4Fe-4S] cluster as a cofactor.

It catalyses the reaction (2R,3S)-3-isopropylmalate = (2S)-2-isopropylmalate. Its pathway is amino-acid biosynthesis; L-leucine biosynthesis; L-leucine from 3-methyl-2-oxobutanoate: step 2/4. In terms of biological role, catalyzes the isomerization between 2-isopropylmalate and 3-isopropylmalate, via the formation of 2-isopropylmaleate. The polypeptide is 3-isopropylmalate dehydratase large subunit (Staphylococcus aureus (strain JH1)).